The following is a 448-amino-acid chain: Tryptophan dimethylallyltransferase 1 (448 aa).

L-tryptophan is bound by residues 80–81 and glutamate 89; that span reads IL. 3 residues coordinate substrate: arginine 100, lysine 186, and tyrosine 188. 2 residues coordinate L-tryptophan: tyrosine 190 and arginine 251. Substrate is bound by residues arginine 264, lysine 266, tyrosine 268, glutamine 350, tyrosine 352, tyrosine 416, and tyrosine 420.

This sequence belongs to the tryptophan dimethylallyltransferase family. Homodimer.

The enzyme catalyses L-tryptophan + dimethylallyl diphosphate = 4-(3-methylbut-2-enyl)-L-tryptophan + diphosphate. Its pathway is alkaloid biosynthesis; ergot alkaloid biosynthesis. Catalyzes the first step of ergot alkaloid biosynthesis. Ergot alkaloids, which are produced by endophyte fungi, can enhance plant host fitness, but also cause livestock toxicosis to host plants. The sequence is that of Tryptophan dimethylallyltransferase 1 (dmaW1) from Epichloe coenophiala (Tall fescue endophyte fungus).